Reading from the N-terminus, the 460-residue chain is Transcription factor TGA10 (460 aa).

A compositionally biased stretch (basic residues) spans methionine 1 to histidine 11. 2 disordered regions span residues methionine 1–glycine 29 and leucine 43–leucine 163. A compositionally biased stretch (low complexity) spans leucine 12–histidine 21. 2 stretches are compositionally biased toward polar residues: residues threonine 65 to proline 81 and aspartate 121 to lysine 136. Basic and acidic residues predominate over residues isoleucine 138–threonine 162. The bZIP domain occupies aspartate 159 to arginine 203. The segment at lysine 161–lysine 181 is basic motif. The Nuclear localization signal signature appears at leucine 163 to arginine 170. Residues leucine 187–isoleucine 201 form a leucine-zipper region. Positions alanine 236 to arginine 455 constitute a DOG1 domain.

It belongs to the bZIP family. In terms of assembly, homodimer. Binds DNA as a dimer. Interacts with floral glutaredoxins GRXC7/ROXY1 and GRXC8/ROXY2 in the nucleus. Interacts with TGA1, TGA2, TGA3, TGA4, TGA5, TGA6, TGA7, TGA9 and PAN. As to expression, expressed at low levels in inflorescence apex and flowers.

Its subcellular location is the nucleus. Together with TGA9, basic leucine-zipper transcription factor required for anther development, probably via the activation of SPL expression in anthers and via the regulation of genes with functions in early and middle tapetal development. Required for signaling responses to pathogen-associated molecular patterns (PAMPs) such as flg22 that involves chloroplastic reactive oxygen species (ROS) production and subsequent expression of H(2)O(2)-responsive genes. This Arabidopsis thaliana (Mouse-ear cress) protein is Transcription factor TGA10.